A 715-amino-acid chain; its full sequence is Fatty acid oxidation complex subunit alpha (715 aa).

Residues 1-190 are enoyl-CoA hydratase; sequence MTTTSAFMLN…KAGLVDDVVP (190 aa). The 3-hydroxyacyl-CoA dehydrogenase stretch occupies residues 306–715; sequence GPLNSVGILG…WTNGETDQGN (410 aa).

It in the N-terminal section; belongs to the enoyl-CoA hydratase/isomerase family. The protein in the central section; belongs to the 3-hydroxyacyl-CoA dehydrogenase family. As to quaternary structure, heterotetramer of two alpha chains (FadJ) and two beta chains (FadI).

It localises to the cytoplasm. It carries out the reaction a (3S)-3-hydroxyacyl-CoA = a (2E)-enoyl-CoA + H2O. The catalysed reaction is a 4-saturated-(3S)-3-hydroxyacyl-CoA = a (3E)-enoyl-CoA + H2O. It catalyses the reaction a (3S)-3-hydroxyacyl-CoA + NAD(+) = a 3-oxoacyl-CoA + NADH + H(+). The enzyme catalyses (3S)-3-hydroxybutanoyl-CoA = (3R)-3-hydroxybutanoyl-CoA. It functions in the pathway lipid metabolism; fatty acid beta-oxidation. Its function is as follows. Catalyzes the formation of a hydroxyacyl-CoA by addition of water on enoyl-CoA. Also exhibits 3-hydroxyacyl-CoA epimerase and 3-hydroxyacyl-CoA dehydrogenase activities. This Salmonella gallinarum (strain 287/91 / NCTC 13346) protein is Fatty acid oxidation complex subunit alpha.